The primary structure comprises 490 residues: UDP-N-acetylmuramyl-tripeptide synthetase (490 aa).

113 to 119 (GTDGKTT) serves as a coordination point for ATP. Residues 158-159 (TT), Ser-185, and Arg-193 contribute to the UDP-N-acetyl-alpha-D-muramoyl-L-alanyl-D-glutamate site. The residue at position 225 (Lys-225) is an N6-carboxylysine.

The protein belongs to the MurCDEF family. MurE subfamily. In terms of processing, carboxylation is probably crucial for Mg(2+) binding and, consequently, for the gamma-phosphate positioning of ATP.

It localises to the cytoplasm. Its pathway is cell wall biogenesis; peptidoglycan biosynthesis. Its function is as follows. Catalyzes the addition of an amino acid to the nucleotide precursor UDP-N-acetylmuramoyl-L-alanyl-D-glutamate (UMAG) in the biosynthesis of bacterial cell-wall peptidoglycan. This Deinococcus radiodurans (strain ATCC 13939 / DSM 20539 / JCM 16871 / CCUG 27074 / LMG 4051 / NBRC 15346 / NCIMB 9279 / VKM B-1422 / R1) protein is UDP-N-acetylmuramyl-tripeptide synthetase.